Here is a 207-residue protein sequence, read N- to C-terminus: Small ribosomal subunit protein uS4 (207 aa).

Residues 31 to 55 (KCKLDSKPGQHGRTSGARTSDYGTQ) form a disordered region. Polar residues predominate over residues 42–53 (GRTSGARTSDYG). Residues 97 to 160 (SRLDNVVYRM…KKQARIIEAL (64 aa)) form the S4 RNA-binding domain.

This sequence belongs to the universal ribosomal protein uS4 family. As to quaternary structure, part of the 30S ribosomal subunit. Contacts protein S5. The interaction surface between S4 and S5 is involved in control of translational fidelity.

In terms of biological role, one of the primary rRNA binding proteins, it binds directly to 16S rRNA where it nucleates assembly of the body of the 30S subunit. Its function is as follows. With S5 and S12 plays an important role in translational accuracy. The polypeptide is Small ribosomal subunit protein uS4 (Burkholderia multivorans (strain ATCC 17616 / 249)).